The following is a 1024-amino-acid chain: Error-prone DNA polymerase (1024 aa).

This sequence belongs to the DNA polymerase type-C family. DnaE2 subfamily.

The protein resides in the cytoplasm. The enzyme catalyses DNA(n) + a 2'-deoxyribonucleoside 5'-triphosphate = DNA(n+1) + diphosphate. DNA polymerase involved in damage-induced mutagenesis and translesion synthesis (TLS). It is not the major replicative DNA polymerase. The chain is Error-prone DNA polymerase from Pseudomonas paraeruginosa (strain DSM 24068 / PA7) (Pseudomonas aeruginosa (strain PA7)).